A 104-amino-acid polypeptide reads, in one-letter code: Large ribosomal subunit protein bL21 (104 aa).

The protein belongs to the bacterial ribosomal protein bL21 family. Part of the 50S ribosomal subunit. Contacts protein L20.

Functionally, this protein binds to 23S rRNA in the presence of protein L20. This is Large ribosomal subunit protein bL21 from Streptococcus pyogenes serotype M1.